We begin with the raw amino-acid sequence, 556 residues long: DNA ligase B (556 aa).

The active-site N6-AMP-lysine intermediate is lysine 124.

The protein belongs to the NAD-dependent DNA ligase family. LigB subfamily.

The catalysed reaction is NAD(+) + (deoxyribonucleotide)n-3'-hydroxyl + 5'-phospho-(deoxyribonucleotide)m = (deoxyribonucleotide)n+m + AMP + beta-nicotinamide D-nucleotide.. Functionally, catalyzes the formation of phosphodiester linkages between 5'-phosphoryl and 3'-hydroxyl groups in double-stranded DNA using NAD as a coenzyme and as the energy source for the reaction. In Pseudomonas fluorescens (strain ATCC BAA-477 / NRRL B-23932 / Pf-5), this protein is DNA ligase B.